Consider the following 457-residue polypeptide: Biphenyl dioxygenase subunit alpha (457 aa).

A Rieske domain is found at 58 to 174 (WLMLGHETHI…VETYKGLVFA (117 aa)). The [2Fe-2S] cluster site is built by C100, H102, C120, and H123. Fe cation contacts are provided by H233 and H239.

Belongs to the bacterial ring-hydroxylating dioxygenase alpha subunit family. Heterohexamer consisting of three BphA subunits and three BphE subunits. A ferredoxin (BphF) and a ferredoxin reductase (BphG) must be present to obtain activity. Requires [2Fe-2S] cluster as cofactor. Fe cation is required as a cofactor.

The enzyme catalyses biphenyl + NADH + O2 + H(+) = (2R,3S)-3-phenylcyclohexa-3,5-diene-1,2-diol + NAD(+). It functions in the pathway xenobiotic degradation; biphenyl degradation; 2-hydroxy-2,4-pentadienoate and benzoate from biphenyl: step 1/4. The polypeptide is Biphenyl dioxygenase subunit alpha (bphA) (Comamonas testosteroni (Pseudomonas testosteroni)).